Consider the following 366-residue polypeptide: MIRTEEMLLNVGPQHPSTHGVFRLVIKIDGEIIKEATPVIGYLHRGTEKIAESLQYTQIIPYTDRMDYLSAMTNNYVLCHAVETMMDLEIPERAEYLRVLAMELGRVASHLVWWGTNLLDIGAVSPFLYAFREREMIINLLSELCGARLTFNYMRVGGVKWDAPDGWIEKVKEFVPYMREQLEGYHDLVSGNEIFLNRVKGVGVYSAEEAISYSLSGANLRCTGVHWDLRKDEPYSIYDRFDFDVPVGSTGDAWDRYVCRMKEIEESLKIIEQAVEQFPKDGAVLAKVPKIIKAPKGEAFVRIESPRGEIGCYIASDGKKEPYRLKFRRPSFYNLQILPKLLKGENIANLITILGGVDIVLGEVDG.

Belongs to the complex I 49 kDa subunit family. NDH-1 is composed of 14 different subunits. Subunits NuoB, C, D, E, F, and G constitute the peripheral sector of the complex.

Its subcellular location is the cell membrane. It carries out the reaction a quinone + NADH + 5 H(+)(in) = a quinol + NAD(+) + 4 H(+)(out). Its function is as follows. NDH-1 shuttles electrons from NADH, via FMN and iron-sulfur (Fe-S) centers, to quinones in the respiratory chain. The immediate electron acceptor for the enzyme in this species is believed to be a menaquinone. Couples the redox reaction to proton translocation (for every two electrons transferred, four hydrogen ions are translocated across the cytoplasmic membrane), and thus conserves the redox energy in a proton gradient. This is NADH-quinone oxidoreductase subunit D from Bacillus mycoides (strain KBAB4) (Bacillus weihenstephanensis).